We begin with the raw amino-acid sequence, 250 residues long: 3-deoxy-manno-octulosonate cytidylyltransferase (250 aa).

The protein belongs to the KdsB family.

It localises to the cytoplasm. It carries out the reaction 3-deoxy-alpha-D-manno-oct-2-ulosonate + CTP = CMP-3-deoxy-beta-D-manno-octulosonate + diphosphate. It participates in nucleotide-sugar biosynthesis; CMP-3-deoxy-D-manno-octulosonate biosynthesis; CMP-3-deoxy-D-manno-octulosonate from 3-deoxy-D-manno-octulosonate and CTP: step 1/1. It functions in the pathway bacterial outer membrane biogenesis; lipopolysaccharide biosynthesis. Its function is as follows. Activates KDO (a required 8-carbon sugar) for incorporation into bacterial lipopolysaccharide in Gram-negative bacteria. This is 3-deoxy-manno-octulosonate cytidylyltransferase from Geobacter sulfurreducens (strain ATCC 51573 / DSM 12127 / PCA).